Reading from the N-terminus, the 181-residue chain is Protein Abitram (181 aa).

This sequence belongs to the ABITRAM family. Interacts with F-actin. Interacts with G-actin.

The protein resides in the nucleus speckle. The protein localises to the cell projection. It localises to the lamellipodium. It is found in the nucleus. Its subcellular location is the growth cone. The protein resides in the dendrite. In terms of biological role, actin-binding protein that regulates actin polymerization, filopodia dynamics and increases the branching of proximal dendrites of developing neurons. The polypeptide is Protein Abitram (Homo sapiens (Human)).